A 418-amino-acid chain; its full sequence is Gamma-glutamyl phosphate reductase (418 aa).

It belongs to the gamma-glutamyl phosphate reductase family.

It localises to the cytoplasm. The enzyme catalyses L-glutamate 5-semialdehyde + phosphate + NADP(+) = L-glutamyl 5-phosphate + NADPH + H(+). It functions in the pathway amino-acid biosynthesis; L-proline biosynthesis; L-glutamate 5-semialdehyde from L-glutamate: step 2/2. In terms of biological role, catalyzes the NADPH-dependent reduction of L-glutamate 5-phosphate into L-glutamate 5-semialdehyde and phosphate. The product spontaneously undergoes cyclization to form 1-pyrroline-5-carboxylate. The protein is Gamma-glutamyl phosphate reductase of Citrifermentans bemidjiense (strain ATCC BAA-1014 / DSM 16622 / JCM 12645 / Bem) (Geobacter bemidjiensis).